A 346-amino-acid chain; its full sequence is Dynein regulatory complex protein 9 (346 aa).

The segment covering 299 to 308 (MEKEQREKNA) has biased composition (basic and acidic residues). The interval 299–346 (MEKEQREKNAATKIQAWWRGTLVRKGPRSKKADKSKKKDGKKGKKKRK) is disordered. In terms of domain architecture, IQ spans 305 to 334 (EKNAATKIQAWWRGTLVRKGPRSKKADKSK). The span at 323-346 (KGPRSKKADKSKKKDGKKGKKKRK) shows a compositional bias: basic residues.

It belongs to the DRC9 family. As to quaternary structure, component of the nexin-dynein regulatory complex (N-DRC). Interacts (via IQ domain) with calmodulin when calcium levels are low. Does not interact with calmodulin in the presence of Ca(2+). Interacts with hsp70 and may form a complex with camk4 and hsp70. In terms of tissue distribution, detected in adult testis, and at lower levels in brain, kidney and ovary.

The protein resides in the cytoplasm. Its subcellular location is the cell projection. It localises to the cilium. It is found in the flagellum. The protein localises to the cytoskeleton. The protein resides in the flagellum axoneme. In terms of biological role, component of the nexin-dynein regulatory complex (N-DRC), a key regulator of ciliary/flagellar motility which maintains the alignment and integrity of the distal axoneme and regulates microtubule sliding in motile axonemes. Binds calmodulin when cellular Ca(2+) levels are low and thereby contributes to the regulation of calcium and calmodulin-dependent protein kinase IV (camk4) activity; contributes to the regulation of camk4 signaling cascades. Plays a role in the regulation of definitive hematopoiesis via its effects on camk4. The polypeptide is Dynein regulatory complex protein 9 (Danio rerio (Zebrafish)).